The following is a 509-amino-acid chain: tRNA-2-methylthio-N(6)-dimethylallyladenosine synthase (509 aa).

Over residues 1 to 15 (MNEQQRLASRQANSS) the composition is skewed to polar residues. Residues 1–25 (MNEQQRLASRQANSSTKKEEKDYSK) form a disordered region. Residues 16–25 (TKKEEKDYSK) show a composition bias toward basic and acidic residues. Positions 66 to 184 (RKFYIRTYGC…LPYILKDAMF (119 aa)) constitute an MTTase N-terminal domain. [4Fe-4S] cluster contacts are provided by Cys-75, Cys-111, Cys-145, Cys-221, Cys-225, and Cys-228. The region spanning 207–437 (RRGDIKAWVN…NTLVNEYGVN (231 aa)) is the Radical SAM core domain. Residues 440 to 503 (KRYIGQIVEV…TWSLNGELVK (64 aa)) enclose the TRAM domain.

The protein belongs to the methylthiotransferase family. MiaB subfamily. Monomer. It depends on [4Fe-4S] cluster as a cofactor.

It localises to the cytoplasm. It carries out the reaction N(6)-dimethylallyladenosine(37) in tRNA + (sulfur carrier)-SH + AH2 + 2 S-adenosyl-L-methionine = 2-methylsulfanyl-N(6)-dimethylallyladenosine(37) in tRNA + (sulfur carrier)-H + 5'-deoxyadenosine + L-methionine + A + S-adenosyl-L-homocysteine + 2 H(+). In terms of biological role, catalyzes the methylthiolation of N6-(dimethylallyl)adenosine (i(6)A), leading to the formation of 2-methylthio-N6-(dimethylallyl)adenosine (ms(2)i(6)A) at position 37 in tRNAs that read codons beginning with uridine. The polypeptide is tRNA-2-methylthio-N(6)-dimethylallyladenosine synthase (Bacillus mycoides (strain KBAB4) (Bacillus weihenstephanensis)).